Reading from the N-terminus, the 160-residue chain is Lipoprotein signal peptidase (160 aa).

The next 3 helical transmembrane spans lie at 5–25, 60–80, and 84–104; these read LVFF…KFII, IEWL…AFFI, and LPFL…AGTV. Residues Asp118 and Asp132 contribute to the active site. A helical transmembrane segment spans residues 128–148; that stretch reads FNIADSCLTVGVIGLLLLYIV.

This sequence belongs to the peptidase A8 family.

Its subcellular location is the cell membrane. It catalyses the reaction Release of signal peptides from bacterial membrane prolipoproteins. Hydrolyzes -Xaa-Yaa-Zaa-|-(S,diacylglyceryl)Cys-, in which Xaa is hydrophobic (preferably Leu), and Yaa (Ala or Ser) and Zaa (Gly or Ala) have small, neutral side chains.. The protein operates within protein modification; lipoprotein biosynthesis (signal peptide cleavage). Functionally, this protein specifically catalyzes the removal of signal peptides from prolipoproteins. The chain is Lipoprotein signal peptidase from Dehalococcoides mccartyi (strain ATCC BAA-2100 / JCM 16839 / KCTC 5957 / BAV1).